Here is a 142-residue protein sequence, read N- to C-terminus: Metallothiol transferase FosB (142 aa).

A VOC domain is found at 5–120 (SVNHICFSVS…DGHKIELHTG (116 aa)). Mg(2+)-binding residues include His-8, His-67, and Glu-116. Glu-116 (proton donor/acceptor) is an active-site residue.

It belongs to the fosfomycin resistance protein family. FosB subfamily. In terms of assembly, homodimer. Mg(2+) serves as cofactor.

The protein localises to the cytoplasm. Functionally, metallothiol transferase which confers resistance to fosfomycin by catalyzing the addition of a thiol cofactor to fosfomycin. L-cysteine is probably the physiological thiol donor. This Staphylococcus epidermidis (strain ATCC 12228 / FDA PCI 1200) protein is Metallothiol transferase FosB.